The primary structure comprises 451 residues: DNA polymerase IV (451 aa).

Residues 5-187 (VIHVDMDAFF…LPVGRLWGVG (183 aa)) enclose the UmuC domain. Mg(2+)-binding residues include aspartate 9 and aspartate 104. Glutamate 105 is a catalytic residue.

Belongs to the DNA polymerase type-Y family. Monomer. It depends on Mg(2+) as a cofactor.

It localises to the cytoplasm. The catalysed reaction is DNA(n) + a 2'-deoxyribonucleoside 5'-triphosphate = DNA(n+1) + diphosphate. Its function is as follows. Poorly processive, error-prone DNA polymerase involved in untargeted mutagenesis. Copies undamaged DNA at stalled replication forks, which arise in vivo from mismatched or misaligned primer ends. These misaligned primers can be extended by PolIV. Exhibits no 3'-5' exonuclease (proofreading) activity. May be involved in translesional synthesis, in conjunction with the beta clamp from PolIII. The sequence is that of DNA polymerase IV from Corynebacterium diphtheriae (strain ATCC 700971 / NCTC 13129 / Biotype gravis).